We begin with the raw amino-acid sequence, 78 residues long: uncharacterized protein (78 aa).

2 helical membrane-spanning segments follow: residues Ile-25–Val-45 and Lys-50–Val-70.

The protein localises to the membrane. This is an uncharacterized protein from Saccharomyces cerevisiae (strain ATCC 204508 / S288c) (Baker's yeast).